A 616-amino-acid polypeptide reads, in one-letter code: Chaperone protein HscA homolog (616 aa).

This sequence belongs to the heat shock protein 70 family.

Functionally, probable chaperone. Has a low intrinsic ATPase activity which is markedly stimulated by HscB. This chain is Chaperone protein HscA homolog, found in Vibrio cholerae serotype O1 (strain ATCC 39315 / El Tor Inaba N16961).